The sequence spans 146 residues: VELTAEEKAAVLALWDKVKEDEVGGEALGRLLVVYPWTQRFFDSFGDLSTPAAVMGNAKVKAHGKKVLHSFGDGVHHLDNLKGTFAALSELHCDKLHVDPENFRLLGNVLVVVLAKHFGKQFTPELQAAYQKVVAGVANALAHKYH.

N-acetylvaline is present on valine 1. Positions 2–146 (ELTAEEKAAV…VANALAHKYH (145 aa)) constitute a Globin domain. Serine 44 bears the Phosphoserine mark. Lysine 59 is subject to N6-acetyllysine. Histidine 63 serves as a coordination point for heme b. Position 82 is an N6-acetyllysine (lysine 82). Histidine 92 contacts heme b. S-nitrosocysteine is present on cysteine 93. Lysine 144 bears the N6-acetyllysine mark.

This sequence belongs to the globin family. Heterotetramer of two alpha chains and two beta chains. In terms of tissue distribution, red blood cells.

Involved in oxygen transport from the lung to the various peripheral tissues. This chain is Hemoglobin subunit beta (HBB), found in Ceratotherium simum (White rhinoceros).